The following is a 310-amino-acid chain: Homoserine kinase (310 aa).

An ATP-binding site is contributed by 91–101 (PIGSGLGSSAC).

Belongs to the GHMP kinase family. Homoserine kinase subfamily.

Its subcellular location is the cytoplasm. The enzyme catalyses L-homoserine + ATP = O-phospho-L-homoserine + ADP + H(+). Its pathway is amino-acid biosynthesis; L-threonine biosynthesis; L-threonine from L-aspartate: step 4/5. Functionally, catalyzes the ATP-dependent phosphorylation of L-homoserine to L-homoserine phosphate. In Shigella sonnei (strain Ss046), this protein is Homoserine kinase.